A 629-amino-acid polypeptide reads, in one-letter code: Probable potassium transport system protein Kup 3 (629 aa).

12 helical membrane-spanning segments follow: residues 20–40, 61–81, 106–126, 143–163, 171–191, 212–232, 253–273, 291–311, 343–363, 372–392, 400–420, and 425–445; these read LSLS…LYTF, VSLI…SFAL, PFII…GTIT, PSLK…LFAI, IGKA…ILGA, FLFS…LCVT, WFGL…ALVL, FLLP…QAII, IYIG…TIGF, AYGI…FIAL, IITS…FFAA, and FING…MMYI.

This sequence belongs to the HAK/KUP transporter (TC 2.A.72) family.

The protein localises to the cell inner membrane. It catalyses the reaction K(+)(in) + H(+)(in) = K(+)(out) + H(+)(out). Functionally, transport of potassium into the cell. Likely operates as a K(+):H(+) symporter. This Legionella pneumophila (strain Lens) protein is Probable potassium transport system protein Kup 3.